A 467-amino-acid chain; its full sequence is L-seryl-tRNA(Sec) selenium transferase (467 aa).

Lysine 298 carries the N6-(pyridoxal phosphate)lysine modification.

The protein belongs to the SelA family. The cofactor is pyridoxal 5'-phosphate.

Its subcellular location is the cytoplasm. The catalysed reaction is L-seryl-tRNA(Sec) + selenophosphate + H(+) = L-selenocysteinyl-tRNA(Sec) + phosphate. Its pathway is aminoacyl-tRNA biosynthesis; selenocysteinyl-tRNA(Sec) biosynthesis; selenocysteinyl-tRNA(Sec) from L-seryl-tRNA(Sec) (bacterial route): step 1/1. Converts seryl-tRNA(Sec) to selenocysteinyl-tRNA(Sec) required for selenoprotein biosynthesis. In Alkaliphilus oremlandii (strain OhILAs) (Clostridium oremlandii (strain OhILAs)), this protein is L-seryl-tRNA(Sec) selenium transferase.